We begin with the raw amino-acid sequence, 350 residues long: Leucine-rich repeat-containing protein 23 (350 aa).

Residues M1–K54 show a composition bias toward acidic residues. The disordered stretch occupies residues M1 to S64. LRR repeat units lie at residues H107–T128, H129–P150, Y151–P171, R172–N193, S196–P216, S217–V238, N239–L260, and A262–Y283. The LRRCT domain occupies N296–T334. The stretch at Q314–E344 forms a coiled coil. Residues E325–N350 are disordered.

It is found in the cytoplasm. It localises to the cytoskeleton. The protein resides in the flagellum axoneme. This is Leucine-rich repeat-containing protein 23 (lrrc23) from Xenopus tropicalis (Western clawed frog).